The sequence spans 406 residues: Probable endo-xylogalacturonan hydrolase A (406 aa).

The N-terminal stretch at 1 to 18 is a signal peptide; sequence MLYPRNLALFSLLSLSSA. 4 PbH1 repeats span residues 183–213, 214–235, 237–257, and 299–320; these read TQHV…DIGA, STHV…AFKP, SNYV…SVGS, and VKNV…QIES. The active-site Proton donor is Asp-228. His-251 is an active-site residue. Asn-301 carries N-linked (GlcNAc...) asparagine glycosylation.

Belongs to the glycosyl hydrolase 28 family.

The protein localises to the secreted. In terms of biological role, pectinolytic enzyme involved in the degradation of xylogalacturonan (xga), a galacturonan backbone heavily substituted with xylose, and which is one important component of the hairy regions of pectin. Activity requires a galacturonic acid backbone substituted with xylose. The protein is Probable endo-xylogalacturonan hydrolase A (xghA) of Aspergillus fumigatus (strain CBS 144.89 / FGSC A1163 / CEA10) (Neosartorya fumigata).